The chain runs to 607 residues: Rap1 GTPase-GDP dissociation stimulator 1-A (607 aa).

5 ARM repeats span residues 79–118, 170–211, 347–390, 391–431, and 479–519; these read ELMR…NICY, DSLQ…NLAE, DGNC…NLAI, PVVN…MLID, and SKDV…LIAA.

As to quaternary structure, interacts with ralB. Probably interacts with the post-translationally isoprenylated (geranyl-geranylation) forms of ral proteins. Interacts with both GDP-bound and GTP-bound forms of ralA, but interaction is much stronger with ralA-GDP. As to expression, weakly expressed in adult tissues with highest levels found in spleen, kidney, skin and A6 cells.

The protein localises to the cytoplasm. It is found in the cytosol. The protein resides in the endoplasmic reticulum. It localises to the mitochondrion. In terms of biological role, stimulates GDP/GTP exchange reaction of a group of small GTP-binding proteins (G proteins) including Rap1a/Rap1b, RhoA, RhoB and KRas, by stimulating the dissociation of GDP from and the subsequent binding of GTP to each small G protein. The chain is Rap1 GTPase-GDP dissociation stimulator 1-A (rap1gds1-a) from Xenopus laevis (African clawed frog).